A 465-amino-acid polypeptide reads, in one-letter code: Ribulose bisphosphate carboxylase large chain (465 aa).

Lysine 4 bears the N6,N6,N6-trimethyllysine mark. Residues asparagine 113 and threonine 163 each coordinate substrate. Lysine 165 functions as the Proton acceptor in the catalytic mechanism. Lysine 167 lines the substrate pocket. Lysine 191, aspartate 193, and glutamate 194 together coordinate Mg(2+). N6-carboxylysine is present on lysine 191. Catalysis depends on histidine 284, which acts as the Proton acceptor. Substrate-binding residues include arginine 285, histidine 317, and serine 369.

This sequence belongs to the RuBisCO large chain family. Type I subfamily. As to quaternary structure, heterohexadecamer of 8 large chains and 8 small chains; disulfide-linked. The disulfide link is formed within the large subunit homodimers. Requires Mg(2+) as cofactor. Post-translationally, the disulfide bond which can form in the large chain dimeric partners within the hexadecamer appears to be associated with oxidative stress and protein turnover.

It is found in the plastid. The protein localises to the chloroplast. It catalyses the reaction 2 (2R)-3-phosphoglycerate + 2 H(+) = D-ribulose 1,5-bisphosphate + CO2 + H2O. The catalysed reaction is D-ribulose 1,5-bisphosphate + O2 = 2-phosphoglycolate + (2R)-3-phosphoglycerate + 2 H(+). Functionally, ruBisCO catalyzes two reactions: the carboxylation of D-ribulose 1,5-bisphosphate, the primary event in carbon dioxide fixation, as well as the oxidative fragmentation of the pentose substrate in the photorespiration process. Both reactions occur simultaneously and in competition at the same active site. The protein is Ribulose bisphosphate carboxylase large chain of Cyrilla racemiflora (Swamp titi).